A 249-amino-acid chain; its full sequence is MKAQVLTLTGSVAHEIELPPVFSSEFRPDLIKKAVIAQQSRRYQPHGAYVYAGITASAVGWGSGRGVSHVPRLKNSSRAAKVPQAKGGREAHPPKVEKVLIRNINQKEKRKALNSAIAATISPELVRSRGHVFTGSLPYVLSGDFESLKKTKEVIAALRAVGVYGDVERAERSRKVRAGRGKLRGRRYKQRKSLLIVTGKERLRAARNLAGVDVCLVDNLNVELLAPGTHSARLTLWTEDAVRKLGGEQ.

It belongs to the universal ribosomal protein uL4 family. As to quaternary structure, part of the 50S ribosomal subunit.

In terms of biological role, one of the primary rRNA binding proteins, this protein initially binds near the 5'-end of the 23S rRNA. It is important during the early stages of 50S assembly. It makes multiple contacts with different domains of the 23S rRNA in the assembled 50S subunit and ribosome. Functionally, forms part of the polypeptide exit tunnel. In Methanospirillum hungatei JF-1 (strain ATCC 27890 / DSM 864 / NBRC 100397 / JF-1), this protein is Large ribosomal subunit protein uL4.